Here is a 626-residue protein sequence, read N- to C-terminus: Threonine--tRNA ligase (626 aa).

Residues 1–144 (MRMLLIHADY…LSRTIVPEEG (144 aa)) form an editing domain region. Positions 207–506 (PHVRLMLEHE…QAQGKKPMFP (300 aa)) are catalytic. 3 residues coordinate Zn(2+): C299, H351, and H475.

Belongs to the class-II aminoacyl-tRNA synthetase family. As to quaternary structure, homodimer. The cofactor is Zn(2+).

Its subcellular location is the cytoplasm. It carries out the reaction tRNA(Thr) + L-threonine + ATP = L-threonyl-tRNA(Thr) + AMP + diphosphate + H(+). In terms of biological role, catalyzes the attachment of threonine to tRNA(Thr) in a two-step reaction: L-threonine is first activated by ATP to form Thr-AMP and then transferred to the acceptor end of tRNA(Thr). Also edits incorrectly charged L-seryl-tRNA(Thr). This chain is Threonine--tRNA ligase, found in Thermococcus gammatolerans (strain DSM 15229 / JCM 11827 / EJ3).